The primary structure comprises 302 residues: UDP-N-acetylenolpyruvoylglucosamine reductase (302 aa).

The FAD-binding PCMH-type domain maps to 32–195 (LGGPADLLAR…VTVTLELVPD (164 aa)). Arg175 is a catalytic residue. The active-site Proton donor is Ser224. Glu294 is an active-site residue.

This sequence belongs to the MurB family. FAD serves as cofactor.

The protein resides in the cytoplasm. It carries out the reaction UDP-N-acetyl-alpha-D-muramate + NADP(+) = UDP-N-acetyl-3-O-(1-carboxyvinyl)-alpha-D-glucosamine + NADPH + H(+). The protein operates within cell wall biogenesis; peptidoglycan biosynthesis. Its function is as follows. Cell wall formation. This is UDP-N-acetylenolpyruvoylglucosamine reductase from Moorella thermoacetica (strain ATCC 39073 / JCM 9320).